A 355-amino-acid chain; its full sequence is Phospho-N-acetylmuramoyl-pentapeptide-transferase (355 aa).

The next 10 helical transmembrane spans lie at 3–23 (GVLI…PWVI), 56–76 (VIIV…GIGF), 80–100 (GLLV…DDYI), 120–140 (AAVA…AGLL), 156–176 (VGII…SNAV), 185–205 (LAAG…FWQF), 224–244 (PLDV…FLWW), 251–271 (IFMG…IAIV), 276–296 (LLLV…MIQV), and 330–350 (FWIV…AEFL).

The protein belongs to the glycosyltransferase 4 family. MraY subfamily. It depends on Mg(2+) as a cofactor.

The protein resides in the cell membrane. The enzyme catalyses UDP-N-acetyl-alpha-D-muramoyl-L-alanyl-gamma-D-glutamyl-meso-2,6-diaminopimeloyl-D-alanyl-D-alanine + di-trans,octa-cis-undecaprenyl phosphate = di-trans,octa-cis-undecaprenyl diphospho-N-acetyl-alpha-D-muramoyl-L-alanyl-D-glutamyl-meso-2,6-diaminopimeloyl-D-alanyl-D-alanine + UMP. Its pathway is cell wall biogenesis; peptidoglycan biosynthesis. In terms of biological role, catalyzes the initial step of the lipid cycle reactions in the biosynthesis of the cell wall peptidoglycan: transfers peptidoglycan precursor phospho-MurNAc-pentapeptide from UDP-MurNAc-pentapeptide onto the lipid carrier undecaprenyl phosphate, yielding undecaprenyl-pyrophosphoryl-MurNAc-pentapeptide, known as lipid I. In Frankia casuarinae (strain DSM 45818 / CECT 9043 / HFP020203 / CcI3), this protein is Phospho-N-acetylmuramoyl-pentapeptide-transferase.